We begin with the raw amino-acid sequence, 465 residues long: 28S rRNA (cytosine-C(5))-methyltransferase (465 aa).

G2 carries the N-acetylglycine modification. Phosphoserine is present on S167. S-adenosyl-L-methionine-binding positions include C234–K240, D258, R263, and D305. C359 serves as the catalytic Nucleophile. A disordered region spans residues T430–T465.

It belongs to the class I-like SAM-binding methyltransferase superfamily. RsmB/NOP family. In terms of tissue distribution, in the hippocampus, specifically expressed in adult hippocampal NG2-positive oligodendrocyte precursor cells (at protein level).

The protein localises to the nucleus. Its subcellular location is the nucleolus. It carries out the reaction a cytidine in 28S rRNA + S-adenosyl-L-methionine = a 5-methylcytidine in 28S rRNA + S-adenosyl-L-homocysteine + H(+). Functionally, S-adenosyl-L-methionine-dependent methyltransferase that specifically methylates the C(5) position of cytosine 3438 (m5C3438) in 28S rRNA. m5C3782 promotes protein translation without affecting ribosome biogenesis and fidelity. Required for corpus callosum and cerebral cortex development. This chain is 28S rRNA (cytosine-C(5))-methyltransferase, found in Mus musculus (Mouse).